Reading from the N-terminus, the 283-residue chain is Elongation factor Ts (283 aa).

The tract at residues Thr-79–Val-82 is involved in Mg(2+) ion dislocation from EF-Tu.

This sequence belongs to the EF-Ts family.

Its subcellular location is the cytoplasm. In terms of biological role, associates with the EF-Tu.GDP complex and induces the exchange of GDP to GTP. It remains bound to the aminoacyl-tRNA.EF-Tu.GTP complex up to the GTP hydrolysis stage on the ribosome. The sequence is that of Elongation factor Ts from Shewanella denitrificans (strain OS217 / ATCC BAA-1090 / DSM 15013).